Consider the following 457-residue polypeptide: tRNA-2-methylthio-N(6)-dimethylallyladenosine synthase (457 aa).

Residues lysine 8–alanine 123 form the MTTase N-terminal domain. Residues cysteine 17, cysteine 54, cysteine 86, cysteine 160, cysteine 164, and cysteine 167 each contribute to the [4Fe-4S] cluster site. The region spanning arginine 146 to arginine 379 is the Radical SAM core domain. One can recognise a TRAM domain in the interval glutamine 382–leucine 449.

The protein belongs to the methylthiotransferase family. MiaB subfamily. As to quaternary structure, monomer. [4Fe-4S] cluster serves as cofactor.

It localises to the cytoplasm. It catalyses the reaction N(6)-dimethylallyladenosine(37) in tRNA + (sulfur carrier)-SH + AH2 + 2 S-adenosyl-L-methionine = 2-methylsulfanyl-N(6)-dimethylallyladenosine(37) in tRNA + (sulfur carrier)-H + 5'-deoxyadenosine + L-methionine + A + S-adenosyl-L-homocysteine + 2 H(+). In terms of biological role, catalyzes the methylthiolation of N6-(dimethylallyl)adenosine (i(6)A), leading to the formation of 2-methylthio-N6-(dimethylallyl)adenosine (ms(2)i(6)A) at position 37 in tRNAs that read codons beginning with uridine. The sequence is that of tRNA-2-methylthio-N(6)-dimethylallyladenosine synthase from Methylibium petroleiphilum (strain ATCC BAA-1232 / LMG 22953 / PM1).